We begin with the raw amino-acid sequence, 353 residues long: Methylthioribose-1-phosphate isomerase (353 aa).

Residues Arg-51 to Ala-53, Arg-94, and Gln-199 contribute to the substrate site. Asp-240 (proton donor) is an active-site residue. Residue Asn-250–Lys-251 coordinates substrate.

This sequence belongs to the eIF-2B alpha/beta/delta subunits family. MtnA subfamily. Homodimer.

The enzyme catalyses 5-(methylsulfanyl)-alpha-D-ribose 1-phosphate = 5-(methylsulfanyl)-D-ribulose 1-phosphate. It functions in the pathway amino-acid biosynthesis; L-methionine biosynthesis via salvage pathway; L-methionine from S-methyl-5-thio-alpha-D-ribose 1-phosphate: step 1/6. In terms of biological role, catalyzes the interconversion of methylthioribose-1-phosphate (MTR-1-P) into methylthioribulose-1-phosphate (MTRu-1-P). This is Methylthioribose-1-phosphate isomerase from Bacillus pumilus (strain SAFR-032).